A 166-amino-acid chain; its full sequence is Bacterial non-heme ferritin (166 aa).

The Ferritin-like diiron domain occupies 2 to 145; that stretch reads LSKDLLEALN…THIDYLNRIG (144 aa). Residues Glu17, Glu50, His53, Glu94, and Gln127 each contribute to the Fe cation site.

This sequence belongs to the ferritin family. Prokaryotic subfamily.

The protein resides in the cytoplasm. It catalyses the reaction 4 Fe(2+) + O2 + 6 H2O = 4 iron(III) oxide-hydroxide + 12 H(+). Iron-storage protein. This is Bacterial non-heme ferritin (ftnA) from Staphylococcus haemolyticus (strain JCSC1435).